The following is a 588-amino-acid chain: MRIKKKNTSGNAKNFVTRSQAVRKLQVSLADFRRLCIFKGIYPREPRNKKKANKGSTAPTTFYYAKDIQYLMHEPVLNKFREHKTFAKKLTRALGRGEVSSAKKLDENRTSYKLDHIIKERYPSFPDAVRDIDDALNMLFLFANLPATDQVSSKITKDANEICNQWLAYVARERLVRKVFVSIKGVYYQASIRGEDVRWLVPFKFPENIPSDIDFRIMLTFLEFYSTLLHFVLYKLYTDSDLVYPPKVDIAKNKIISGLSSYILESETEENVLTATKLSEPTGETSNIDSETLKLAMKADENVDDTNPEDEQTENVETVELDAFQDNNKNKGDILAQPSQYESPVSTLFSDFVFYVGREVPIDILEFLILSCGGSVISEAALDKLETKDIDFSKVTHQIVDRPVLKNKVAGRTYIQPQWIFDCLNKAKLVPANLYLPGETLPPHLSPWGDASGYDPNVSDAEEEGEDDEDEDSEEGSGAEVEENVDEDEDDEELRAQKELELEAQGVKYSDIKDTEVKSKNKKRKAASTEAEEEKDLKMIMMSNKQRKLYKKMKYSNAKKEEKVENLKKKKKQISKTKEKLTKLEGKK.

The region spanning 344–437 (PVSTLFSDFV…KLVPANLYLP (94 aa)) is the BRCT domain. Disordered stretches follow at residues 446–533 (SPWG…EAEE) and 559–588 (KKEE…EGKK). Acidic residues predominate over residues 460 to 493 (DAEEEGEDDEDEDSEEGSGAEVEENVDEDEDDEE). Composition is skewed to basic and acidic residues over residues 510–519 (SDIKDTEVKS) and 576–588 (KTKE…EGKK). The stretch at 512 to 588 (IKDTEVKSKN…EKLTKLEGKK (77 aa)) forms a coiled coil.

Belongs to the pescadillo family. As to quaternary structure, component of the NOP7 complex, composed of ERB1, NOP7 and YTM1. The complex is held together by ERB1, which interacts with NOP7 via its N-terminal domain and with YTM1 via a high-affinity interaction between the seven-bladed beta-propeller domains of the 2 proteins. The NOP7 complex associates with the 66S pre-ribosome.

It localises to the nucleus. The protein localises to the nucleolus. The protein resides in the nucleoplasm. In terms of biological role, component of the NOP7 complex, which is required for maturation of the 25S and 5.8S ribosomal RNAs and formation of the 60S ribosome. This Vanderwaltozyma polyspora (strain ATCC 22028 / DSM 70294 / BCRC 21397 / CBS 2163 / NBRC 10782 / NRRL Y-8283 / UCD 57-17) (Kluyveromyces polysporus) protein is Pescadillo homolog.